Here is a 466-residue protein sequence, read N- to C-terminus: Ribulose bisphosphate carboxylase large chain (466 aa).

Lysine 4 is modified (N6,N6,N6-trimethyllysine). Residues asparagine 113 and threonine 163 each coordinate substrate. Catalysis depends on lysine 165, which acts as the Proton acceptor. A substrate-binding site is contributed by lysine 167. 3 residues coordinate Mg(2+): lysine 191, aspartate 193, and glutamate 194. Lysine 191 is subject to N6-carboxylysine. Histidine 284 (proton acceptor) is an active-site residue. The substrate site is built by arginine 285, histidine 317, and serine 369.

Belongs to the RuBisCO large chain family. Type I subfamily. Heterohexadecamer of 8 large chains and 8 small chains; disulfide-linked. The disulfide link is formed within the large subunit homodimers. Mg(2+) serves as cofactor. In terms of processing, the disulfide bond which can form in the large chain dimeric partners within the hexadecamer appears to be associated with oxidative stress and protein turnover.

Its subcellular location is the plastid. The protein localises to the chloroplast. It carries out the reaction 2 (2R)-3-phosphoglycerate + 2 H(+) = D-ribulose 1,5-bisphosphate + CO2 + H2O. The enzyme catalyses D-ribulose 1,5-bisphosphate + O2 = 2-phosphoglycolate + (2R)-3-phosphoglycerate + 2 H(+). Its function is as follows. RuBisCO catalyzes two reactions: the carboxylation of D-ribulose 1,5-bisphosphate, the primary event in carbon dioxide fixation, as well as the oxidative fragmentation of the pentose substrate in the photorespiration process. Both reactions occur simultaneously and in competition at the same active site. This Pinguicula caerulea (Blueflower butterwort) protein is Ribulose bisphosphate carboxylase large chain.